Reading from the N-terminus, the 495-residue chain is Sulfhydryl oxidase 2 (495 aa).

An N-terminal signal peptide occupies residues 1–15 (MSLVHLLLFAGLVIA). In terms of domain architecture, Thioredoxin spans 29–164 (EISDQKDKAV…LLNWINKQIG (136 aa)). N41 carries N-linked (GlcNAc...) asparagine glycosylation. Active-site nucleophile residues include C66 and C69. The cysteines at positions 66 and 69 are disulfide-linked. N182, N257, N266, and N292 each carry an N-linked (GlcNAc...) asparagine glycan. C287 and C299 form a disulfide bridge. The ERV/ALR sulfhydryl oxidase domain maps to 290-392 (SKNDTRGFSC…GDPKFPKIIW (103 aa)). Residues R295, W302, H306, E336, H340, 363–370 (WSTHNKVN), K389, and W392 contribute to the FAD site. A disulfide bridge connects residues C334 and C337. C398 and C401 are oxidised to a cystine.

Requires FAD as cofactor.

Its subcellular location is the secreted. The enzyme catalyses 2 R'C(R)SH + O2 = R'C(R)S-S(R)CR' + H2O2. Catalyzes the oxidation of sulfhydryl groups in peptide and protein thiols to disulfides with the reduction of oxygen to hydrogen peroxide. May contribute to disulfide bond formation in a variety of secreted proteins. This Arabidopsis thaliana (Mouse-ear cress) protein is Sulfhydryl oxidase 2 (QSOX2).